Reading from the N-terminus, the 1004-residue chain is Centriolar coiled-coil protein of 110 kDa (1004 aa).

Residues 1 to 221 (MEEYEEFCEK…SCLAEVTPDP (221 aa)) form a CEP97 binding region. A coiled-coil region spans residues 51–90 (EKRKKIQEEKQKALDVQSRKQANRKKALLTRVQEILENVQ). The interval 64-82 (LDVQSRKQANRKKALLTRV) is calmodulin-binding. Residues 67-82 (QSRKQANRKKALLTRV) form a required for interaction with CEP290 region. Disordered regions lie at residues 147-194 (PVNN…SSAS) and 239-279 (RELS…APPM). Ser170 carries the phosphoserine modification. Residues 243 to 252 (SRSLRNSLKR) are compositionally biased toward low complexity. The segment covering 253–276 (SVNETHSDRENDAAKASDCVKEKA) has biased composition (basic and acidic residues). Residues 349–564 (ENKVKSLKGP…QTQTSRQQMD (216 aa)) form an interaction with CEP76 region. Ser364, Ser370, and Ser398 each carry phosphoserine. The tract at residues 401-433 (GKEEAVDRTAPAAAETTNESETVPKSPTDLTGV) is disordered. Positions 415 to 433 (ETTNESETVPKSPTDLTGV) are enriched in polar residues. Ser550 is subject to Phosphoserine. Residues 641 to 699 (QELLKSKMLAFEEMRKRLEEQHAQQLSLLIAEQEREQEQLQKEIEEQEKMLKEKAVTTD) adopt a coiled-coil conformation. Calmodulin-binding regions lie at residues 773–813 (GRAQ…DKLK) and 901–916 (VALS…RKKF). Residues 955–1004 (LSRQGTPKTSVKGVVQNRQKPSQSRVPNRAPVSGAYAGKTQRKRPNVATI) form a disordered region. Polar residues predominate over residues 970–980 (QNRQKPSQSRV). The span at 994–1004 (TQRKRPNVATI) shows a compositional bias: basic residues.

In terms of assembly, interacts with CALM1, CETN2, CEP76, CEP104, CEP290 and TALPID3. Interacts with CEP97. Seems to associate with discrete CETN2, CEP97 and CEP290-containing complexes. Interacts with NEURL4 and CCNF; these interactions are not mutually exclusive and both lead to CCP110 ubiquitination and proteasome-dependent degradation. Via its interaction with NEURL4, may indirectly interact with HERC2. Interacts with KIF24, leading to its recruitment to centrioles. Interacts with USP20 and USP33. Interacts with MPHOSPH9. Interacts (via N-terminal region) with ENKD1 (via central region); ENKD1 competes with CEP97 for binding to CCP110, destabilizing the interaction between CP110 and CEP97 which promotes the removal of CCP110 and CEP97 from the mother centriole and allows the initiation of ciliogenesis. In terms of processing, phosphorylated by CDKs. Post-translationally, ubiquitinated by the SCF(CCNF) during G2 phase, leading to its degradation by the proteasome and preventing centrosome reduplication. Deubiquitinated by USP33 in S and G2/M phase, leading to stabilize CCP110 during the period which centrioles duplicate and elongate. Ubiquitinated by the EDVP complex, leading to its degradation.

Its subcellular location is the cytoplasm. The protein localises to the cytoskeleton. It localises to the microtubule organizing center. It is found in the centrosome. The protein resides in the centriole. Its subcellular location is the cilium basal body. Functionally, necessary for centrosome duplication at different stages of procentriole formation. Acts as a key negative regulator of ciliogenesis in collaboration with CEP97 by capping the mother centriole thereby preventing cilia formation. Also involved in promoting ciliogenesis. May play a role in the assembly of the mother centriole subdistal appendages (SDA) thereby effecting the fusion of recycling endosomes to basal bodies during cilia formation. Required for correct spindle formation and has a role in regulating cytokinesis and genome stability via cooperation with CALM1 and CETN2. In Mus musculus (Mouse), this protein is Centriolar coiled-coil protein of 110 kDa (Ccp110).